The following is an 86-amino-acid chain: Large ribosomal subunit protein bL31B (86 aa).

The protein belongs to the bacterial ribosomal protein bL31 family. Type B subfamily. Part of the 50S ribosomal subunit.

In Streptococcus equi subsp. equi (strain 4047), this protein is Large ribosomal subunit protein bL31B.